We begin with the raw amino-acid sequence, 175 residues long: ATP-dependent protease subunit HslV (175 aa).

The active site involves threonine 2. The Na(+) site is built by glycine 158, cysteine 161, and threonine 164.

It belongs to the peptidase T1B family. HslV subfamily. A double ring-shaped homohexamer of HslV is capped on each side by a ring-shaped HslU homohexamer. The assembly of the HslU/HslV complex is dependent on binding of ATP.

It is found in the cytoplasm. The enzyme catalyses ATP-dependent cleavage of peptide bonds with broad specificity.. With respect to regulation, allosterically activated by HslU binding. Its function is as follows. Protease subunit of a proteasome-like degradation complex believed to be a general protein degrading machinery. In Histophilus somni (strain 129Pt) (Haemophilus somnus), this protein is ATP-dependent protease subunit HslV.